The following is a 906-amino-acid chain: Protein translocase subunit SecA (906 aa).

Residues glutamine 86, 104-108 (GEGKT), and aspartate 499 each bind ATP. The tract at residues 865–885 (VSRIDPKDRNPEDPTSWGRVS) is disordered. 4 residues coordinate Zn(2+): cysteine 890, cysteine 892, cysteine 901, and histidine 902.

Belongs to the SecA family. In terms of assembly, monomer and homodimer. Part of the essential Sec protein translocation apparatus which comprises SecA, SecYEG and auxiliary proteins SecDF-YajC and YidC. It depends on Zn(2+) as a cofactor.

It is found in the cell inner membrane. Its subcellular location is the cytoplasm. The enzyme catalyses ATP + H2O + cellular proteinSide 1 = ADP + phosphate + cellular proteinSide 2.. Its function is as follows. Part of the Sec protein translocase complex. Interacts with the SecYEG preprotein conducting channel. Has a central role in coupling the hydrolysis of ATP to the transfer of proteins into and across the cell membrane, serving both as a receptor for the preprotein-SecB complex and as an ATP-driven molecular motor driving the stepwise translocation of polypeptide chains across the membrane. This is Protein translocase subunit SecA from Rickettsia canadensis (strain McKiel).